Reading from the N-terminus, the 213-residue chain is Imidazoleglycerol-phosphate dehydratase (213 aa).

Belongs to the imidazoleglycerol-phosphate dehydratase family.

It localises to the cytoplasm. The catalysed reaction is D-erythro-1-(imidazol-4-yl)glycerol 3-phosphate = 3-(imidazol-4-yl)-2-oxopropyl phosphate + H2O. The protein operates within amino-acid biosynthesis; L-histidine biosynthesis; L-histidine from 5-phospho-alpha-D-ribose 1-diphosphate: step 6/9. This Trichodesmium erythraeum (strain IMS101) protein is Imidazoleglycerol-phosphate dehydratase.